The primary structure comprises 236 residues: Pyridoxine 5'-phosphate synthase (236 aa).

Residue Asn-6 participates in 3-amino-2-oxopropyl phosphate binding. A 1-deoxy-D-xylulose 5-phosphate-binding site is contributed by 8-9; that stretch reads DH. Arg-17 lines the 3-amino-2-oxopropyl phosphate pocket. Residue His-42 is the Proton acceptor of the active site. Residues Arg-44 and His-49 each coordinate 1-deoxy-D-xylulose 5-phosphate. Glu-69 acts as the Proton acceptor in catalysis. Residue Thr-99 participates in 1-deoxy-D-xylulose 5-phosphate binding. Catalysis depends on His-190, which acts as the Proton donor. Residues Gly-191 and 212–213 each bind 3-amino-2-oxopropyl phosphate; that span reads GH.

The protein belongs to the PNP synthase family. In terms of assembly, homooctamer; tetramer of dimers.

It is found in the cytoplasm. The enzyme catalyses 3-amino-2-oxopropyl phosphate + 1-deoxy-D-xylulose 5-phosphate = pyridoxine 5'-phosphate + phosphate + 2 H2O + H(+). Its pathway is cofactor biosynthesis; pyridoxine 5'-phosphate biosynthesis; pyridoxine 5'-phosphate from D-erythrose 4-phosphate: step 5/5. Catalyzes the complicated ring closure reaction between the two acyclic compounds 1-deoxy-D-xylulose-5-phosphate (DXP) and 3-amino-2-oxopropyl phosphate (1-amino-acetone-3-phosphate or AAP) to form pyridoxine 5'-phosphate (PNP) and inorganic phosphate. In Pelodictyon phaeoclathratiforme (strain DSM 5477 / BU-1), this protein is Pyridoxine 5'-phosphate synthase.